A 420-amino-acid polypeptide reads, in one-letter code: Outer capsid protein P8 (420 aa).

Belongs to the phytoreovirus outer capsid protein P8 family. Homotrimer. Homomultimer. Interacts with host peroxisomal glycolate oxidase (GOX). This interaction mediates its relocation to virus factories peripheral to host peroxisomes.

Its subcellular location is the virion. The protein localises to the host cytoplasm. In terms of biological role, capsid protein which self-assembles to form the outer icosahedral capsid with a T=13 symmetry, about 70 nm in diameter and consisting of 780 molecules capsid proteins. This is Outer capsid protein P8 from Alopecurus aequalis (Barnyard grass).